We begin with the raw amino-acid sequence, 189 residues long: uncharacterized protein (189 aa).

A signal peptide spans Met-1–Ala-19. The disordered stretch occupies residues Pro-24 to Tyr-189. The segment covering Ser-25–Gly-69 has biased composition (low complexity). Positions Ser-70–Ala-101 are enriched in gly residues. Over residues Val-102–Gly-142 the composition is skewed to low complexity. Over residues Phe-144–Asn-157 the composition is skewed to polar residues. Residues Ser-165–Ser-183 are compositionally biased toward gly residues.

This is an uncharacterized protein from Dictyostelium discoideum (Social amoeba).